The chain runs to 388 residues: Succinate--CoA ligase [ADP-forming] subunit beta (388 aa).

Residues lysine 46, 53-55 (GRG), glutamate 99, cysteine 102, and glutamate 107 each bind ATP. Asparagine 199 and aspartate 213 together coordinate Mg(2+). Residues asparagine 264 and 321–323 (GIV) each bind substrate.

This sequence belongs to the succinate/malate CoA ligase beta subunit family. In terms of assembly, heterotetramer of two alpha and two beta subunits. It depends on Mg(2+) as a cofactor.

The catalysed reaction is succinate + ATP + CoA = succinyl-CoA + ADP + phosphate. It catalyses the reaction GTP + succinate + CoA = succinyl-CoA + GDP + phosphate. The protein operates within carbohydrate metabolism; tricarboxylic acid cycle; succinate from succinyl-CoA (ligase route): step 1/1. Succinyl-CoA synthetase functions in the citric acid cycle (TCA), coupling the hydrolysis of succinyl-CoA to the synthesis of either ATP or GTP and thus represents the only step of substrate-level phosphorylation in the TCA. The beta subunit provides nucleotide specificity of the enzyme and binds the substrate succinate, while the binding sites for coenzyme A and phosphate are found in the alpha subunit. The chain is Succinate--CoA ligase [ADP-forming] subunit beta from Actinobacillus pleuropneumoniae serotype 7 (strain AP76).